The sequence spans 507 residues: Putative F-box/LRR-repeat protein At4g00320 (507 aa).

Residues 12 to 60 (RDGISGLPDAMICHILSFLPTKVAASTTVLAKRWKPLLAFMPNLDFDES) enclose the F-box domain. LRR repeat units follow at residues 135–163 (RGFGSNSTFYPLPSEIFVSKTLVRLKIQF), 187–212 (YVKMDTRMLQKLLSGCHTLEELLLMN), 214–240 (IWKESSEPEPCFVSVSVRTLKILKFSR), 317–348 (ILYLTEDTLKVLGCCRETMPVFENLIHLTIRT), and 349–374 (GVHIGWKSLPHLLKNCPNLQTLVFEG).

This is Putative F-box/LRR-repeat protein At4g00320 from Arabidopsis thaliana (Mouse-ear cress).